Here is a 225-residue protein sequence, read N- to C-terminus: MMYHIPGVLSPQDVARFREQLEQAEWVDGRITTGAQGAQVKNNQQVDTRSTLYAALQNEVLNAVNQNALFFAAALPRTLSTPLFNRYQNNETYGFHVDGAVRSHPQNGWMRTDLSATLFLSDPQSYDGGELVVNDTFGQHRVKLPAGDLVLYPSSSLHCVTPVTRGVRVASFMWIQSMIRDDKKRAMLFELDNNIQSLKSRYGESEEILSLLNLYHNLLREWSEI.

A Fe2OG dioxygenase domain is found at 78–177 (TLSTPLFNRY…RVASFMWIQS (100 aa)). The Fe cation site is built by His-96, Asp-98, and His-158. Arg-168 contributes to the 2-oxoglutarate binding site.

Requires Fe(2+) as cofactor. It depends on L-ascorbate as a cofactor.

The protein is PKHD-type hydroxylase YbiX of Escherichia coli (strain 55989 / EAEC).